Reading from the N-terminus, the 268-residue chain is Unknown seed protein USP (268 aa).

Residues 1 to 25 (MEFAHLTVLSLFCLAFVGITATSSG) form the signal peptide. Positions 68 to 259 (LFFEHDLHPG…GNKAAAWVPN (192 aa)) constitute a BURP domain.

In terms of tissue distribution, expressed in seeds. Detected only in the embryo. In germinating seedlings, detected in roots, root caps, root hairs, vascular bundle, mesophyll cells and epidermal cells of the cotyledons and the hypocotyl.

It localises to the golgi apparatus. It is found in the golgi stack. The protein resides in the prevacuolar compartment. Its function is as follows. Associated with the protein storage vacuole formation. This is Unknown seed protein USP from Vicia faba (Broad bean).